The sequence spans 160 residues: Cytochrome b6-f complex subunit 4 (160 aa).

The next 3 membrane-spanning stretches (helical) occupy residues 36–56 (LLYI…GLAV), 95–115 (LLGV…PFLE), and 131–151 (TVFL…ALPI).

It belongs to the cytochrome b family. PetD subfamily. As to quaternary structure, the 4 large subunits of the cytochrome b6-f complex are cytochrome b6, subunit IV (17 kDa polypeptide, petD), cytochrome f and the Rieske protein, while the 4 small subunits are petG, petL, petM and petN. The complex functions as a dimer.

It localises to the plastid. The protein resides in the chloroplast thylakoid membrane. Its function is as follows. Component of the cytochrome b6-f complex, which mediates electron transfer between photosystem II (PSII) and photosystem I (PSI), cyclic electron flow around PSI, and state transitions. This Spirogyra maxima (Green alga) protein is Cytochrome b6-f complex subunit 4.